The chain runs to 564 residues: Ribonuclease J (564 aa).

Zn(2+) is bound by residues histidine 85, histidine 87, aspartate 89, histidine 90, histidine 153, and aspartate 175. Residue histidine 375–histidine 379 coordinates substrate. Histidine 401 contacts Zn(2+).

Belongs to the metallo-beta-lactamase superfamily. RNA-metabolizing metallo-beta-lactamase-like family. Bacterial RNase J subfamily. Homodimer, may be a subunit of the RNA degradosome. Zn(2+) is required as a cofactor.

Its subcellular location is the cytoplasm. In terms of biological role, an RNase that has 5'-3' exonuclease and possibly endonuclease activity. Plays a role in 16S and 23S rRNA processing. Might have a role in mRNA maturation and/or decay. This is Ribonuclease J from Sinorhizobium meliloti (strain Sm2011 / Rm2011 / 2011).